We begin with the raw amino-acid sequence, 730 residues long: Elongation factor 2 (730 aa).

A tr-type G domain is found at 19 to 260 (KFIRNIGIVA…MVVKHLPDPF (242 aa)). GTP-binding positions include 28–35 (AHIDHGKT), 94–98 (DTPGH), and 148–151 (NKVD). Histidine 597 carries the post-translational modification Diphthamide.

Belongs to the TRAFAC class translation factor GTPase superfamily. Classic translation factor GTPase family. EF-G/EF-2 subfamily.

The protein resides in the cytoplasm. Catalyzes the GTP-dependent ribosomal translocation step during translation elongation. During this step, the ribosome changes from the pre-translocational (PRE) to the post-translocational (POST) state as the newly formed A-site-bound peptidyl-tRNA and P-site-bound deacylated tRNA move to the P and E sites, respectively. Catalyzes the coordinated movement of the two tRNA molecules, the mRNA and conformational changes in the ribosome. The chain is Elongation factor 2 from Methanosphaerula palustris (strain ATCC BAA-1556 / DSM 19958 / E1-9c).